The sequence spans 284 residues: Lipase chaperone (284 aa).

The helical transmembrane segment at 4–24 (IAWSLGILVTIGALCAIVWPS) threads the bilayer.

This sequence belongs to the lipase chaperone family.

It localises to the cell inner membrane. In terms of biological role, may be involved in the folding of the extracellular lipase during its passage through the periplasm. The protein is Lipase chaperone (lifO) of Vibrio cholerae serotype O1 (strain ATCC 39315 / El Tor Inaba N16961).